The chain runs to 61 residues: Large ribosomal subunit protein uL30 (61 aa).

It belongs to the universal ribosomal protein uL30 family. In terms of assembly, part of the 50S ribosomal subunit.

This is Large ribosomal subunit protein uL30 from Colwellia psychrerythraea (strain 34H / ATCC BAA-681) (Vibrio psychroerythus).